We begin with the raw amino-acid sequence, 40 residues long: Photosystem II reaction center protein J (40 aa).

The chain crosses the membrane as a helical span at residues 8–28 (IPLWVIGTVAGILVIGIIGIF).

The protein belongs to the PsbJ family. PSII is composed of 1 copy each of membrane proteins PsbA, PsbB, PsbC, PsbD, PsbE, PsbF, PsbH, PsbI, PsbJ, PsbK, PsbL, PsbM, PsbT, PsbX, PsbY, PsbZ, Psb30/Ycf12, at least 3 peripheral proteins of the oxygen-evolving complex and a large number of cofactors. It forms dimeric complexes.

Its subcellular location is the plastid. It is found in the chloroplast thylakoid membrane. Its function is as follows. One of the components of the core complex of photosystem II (PSII). PSII is a light-driven water:plastoquinone oxidoreductase that uses light energy to abstract electrons from H(2)O, generating O(2) and a proton gradient subsequently used for ATP formation. It consists of a core antenna complex that captures photons, and an electron transfer chain that converts photonic excitation into a charge separation. The protein is Photosystem II reaction center protein J of Lobularia maritima (Sweet alyssum).